The following is a 495-amino-acid chain: Lysine--tRNA ligase (495 aa).

The Mg(2+) site is built by Glu406 and Glu413.

It belongs to the class-II aminoacyl-tRNA synthetase family. Homodimer. Requires Mg(2+) as cofactor.

Its subcellular location is the cytoplasm. It carries out the reaction tRNA(Lys) + L-lysine + ATP = L-lysyl-tRNA(Lys) + AMP + diphosphate. This is Lysine--tRNA ligase from Leptospira interrogans serogroup Icterohaemorrhagiae serovar copenhageni (strain Fiocruz L1-130).